The sequence spans 435 residues: Histidine--tRNA ligase (435 aa).

Belongs to the class-II aminoacyl-tRNA synthetase family. As to quaternary structure, homodimer.

The protein resides in the cytoplasm. The enzyme catalyses tRNA(His) + L-histidine + ATP = L-histidyl-tRNA(His) + AMP + diphosphate + H(+). This chain is Histidine--tRNA ligase, found in Synechococcus sp. (strain ATCC 27144 / PCC 6301 / SAUG 1402/1) (Anacystis nidulans).